Consider the following 206-residue polypeptide: Large ribosomal subunit protein uL3 (206 aa).

The segment at 126–155 (HGHAGGPGAHGSRFHRHPGSMGANSTPSRV) is disordered.

It belongs to the universal ribosomal protein uL3 family. As to quaternary structure, part of the 50S ribosomal subunit. Forms a cluster with proteins L14 and L19.

One of the primary rRNA binding proteins, it binds directly near the 3'-end of the 23S rRNA, where it nucleates assembly of the 50S subunit. This chain is Large ribosomal subunit protein uL3, found in Leptospira interrogans serogroup Icterohaemorrhagiae serovar copenhageni (strain Fiocruz L1-130).